We begin with the raw amino-acid sequence, 181 residues long: K99 fimbrial protein (181 aa).

Positions 1–22 are cleaved as a signal peptide; it reads MKKTLLAIILGGMAFATTNASA. C38 and C79 form a disulfide bridge.

The protein belongs to the fimbrial protein family.

It localises to the fimbrium. Fimbriae (also called pili), polar filaments radiating from the surface of the bacterium to a length of 0.5-1.5 micrometers and numbering 100-300 per cell, enable bacteria to colonize the epithelium of specific host organs. Functionally, fanC is the main component of the K99 fimbriae. This is K99 fimbrial protein (fanC) from Escherichia coli.